We begin with the raw amino-acid sequence, 3068 residues long: Highly reducing polyketide synthase 17 (3068 aa).

One can recognise a Ketosynthase family 3 (KS3) domain in the interval isoleucine 100–arginine 526. Residues cysteine 274, histidine 410, and histidine 449 each act as for beta-ketoacyl synthase activity in the active site. Residues tyrosine 627–alanine 938 form a malonyl-CoA:ACP transacylase (MAT) domain region. The active-site For malonyltransferase activity is the serine 721. An N-terminal hotdog fold region spans residues histidine 1027 to aspartate 1160. The interval histidine 1027–valine 1311 is dehydratase (DH) domain. The 308-residue stretch at histidine 1027 to glycine 1334 folds into the PKS/mFAS DH domain. Catalysis depends on histidine 1059, which acts as the Proton acceptor; for dehydratase activity. Positions asparagine 1179–glycine 1334 are C-terminal hotdog fold. Catalysis depends on aspartate 1247, which acts as the Proton donor; for dehydratase activity. The interval leucine 1735 to leucine 2037 is enoylreductase (ER) domain. Positions alanine 2062 to glutamate 2240 are catalytic ketoreductase (KR) domain. Positions threonine 2345–serine 2423 constitute a Carrier domain. At serine 2383 the chain carries O-(pantetheine 4'-phosphoryl)serine. The segment at phenylalanine 2831 to aspartate 3062 is choline/carnitine acyltransferase (cAT) domain.

The protein operates within secondary metabolite biosynthesis. In terms of biological role, highly reducing polyketide synthase; part of the gene cluster that mediates the biosynthesis of (2Z,4E,6E,10E)-9-hydroxydodeca-2,4,6,10-tetraenoic acid (BAA), (2E,4E,6E,10E)-9-hydroxydodeca-2,4,6,10-tetraenoic acid (BAB), and (2Z,4E,6E)-octa-2,4,6-trienedioic acid (PBA). The highly reducing polyketide synthase Ba17a is sufficent to produce PBA and BAA. The still to be characterized protein Ba17b leads to an increased production of BAA as well as to the production of the new compound BAB. BAA does not possess insecticidal activity against G.mellonella larvae, however, both BAA and BAB increase the growth of Candida albicans and BAA can mitigate the fungicidal effects of fluconazole over C.albicans, suggesting that generalist pathogens such as M.anisopliae, can potentially manipulate the yeast microbiota found in arthropods (and anywhere else) by the activity of compounds as BAA and BAB. This is Highly reducing polyketide synthase 17 from Metarhizium anisopliae (Entomophthora anisopliae).